Here is a 188-residue protein sequence, read N- to C-terminus: Holliday junction branch migration complex subunit RuvA (188 aa).

Positions 1 to 62 (MIVGVRGVLV…EDAQLLYGFL (62 aa)) are domain I. The interval 63-135 (ELGEKKLFER…LSGFDTELII (73 aa)) is domain II. Residues 135-139 (ISASE) are flexible linker. The segment at 140-188 (PKSLAVAQASEALESLGFKKDKISKALGSCSAVDTAILVKEALKLLQTI) is domain III.

It belongs to the RuvA family. As to quaternary structure, homotetramer. Forms an RuvA(8)-RuvB(12)-Holliday junction (HJ) complex. HJ DNA is sandwiched between 2 RuvA tetramers; dsDNA enters through RuvA and exits via RuvB. An RuvB hexamer assembles on each DNA strand where it exits the tetramer. Each RuvB hexamer is contacted by two RuvA subunits (via domain III) on 2 adjacent RuvB subunits; this complex drives branch migration. In the full resolvosome a probable DNA-RuvA(4)-RuvB(12)-RuvC(2) complex forms which resolves the HJ.

The protein resides in the cytoplasm. Functionally, the RuvA-RuvB-RuvC complex processes Holliday junction (HJ) DNA during genetic recombination and DNA repair, while the RuvA-RuvB complex plays an important role in the rescue of blocked DNA replication forks via replication fork reversal (RFR). RuvA specifically binds to HJ cruciform DNA, conferring on it an open structure. The RuvB hexamer acts as an ATP-dependent pump, pulling dsDNA into and through the RuvAB complex. HJ branch migration allows RuvC to scan DNA until it finds its consensus sequence, where it cleaves and resolves the cruciform DNA. This Sulfurimonas denitrificans (strain ATCC 33889 / DSM 1251) (Thiomicrospira denitrificans (strain ATCC 33889 / DSM 1251)) protein is Holliday junction branch migration complex subunit RuvA.